Consider the following 622-residue polypeptide: Chaperone protein HscA homolog (622 aa).

It belongs to the heat shock protein 70 family.

Functionally, chaperone involved in the maturation of iron-sulfur cluster-containing proteins. Has a low intrinsic ATPase activity which is markedly stimulated by HscB. This chain is Chaperone protein HscA homolog, found in Burkholderia ambifaria (strain MC40-6).